Consider the following 119-residue polypeptide: Hemerythrin subunit B (119 aa).

The Fe cation site is built by His26, His55, Glu59, His74, His78, His107, and Asp112.

This sequence belongs to the hemerythrin family.

Functionally, hemerythrin is a respiratory protein in blood cells of certain marine worms. The oxygen-binding site in each chain contains two iron atoms. In Sipunculus nudus (Sipunculan worm), this protein is Hemerythrin subunit B.